The primary structure comprises 551 residues: Tetrachloroethene reductive dehalogenase (551 aa).

The tat-type signal signal peptide spans Met1–Ala39. One can recognise a 4Fe-4S ferredoxin-type 1 domain in the interval Pro411–Asp440. 8 residues coordinate [4Fe-4S] cluster: Cys420, Cys423, Cys426, Cys430, Cys467, Cys478, Cys481, and Cys485. One can recognise a 4Fe-4S ferredoxin-type 2 domain in the interval Cys478 to Asp496.

It belongs to the PceA family. Requires [4Fe-4S] cluster as cofactor. Corrinoid is required as a cofactor. In terms of processing, predicted to be exported by the Tat system. The position of the signal peptide cleavage has not been experimentally proven.

Its subcellular location is the cell membrane. The catalysed reaction is trichloroethene + chloride + A + H(+) = tetrachloroethene + AH2. It catalyses the reaction trichloroethene + AH2 = (Z)-1,2-dichloroethene + chloride + A + H(+). Functionally, catalyzes the reductive dechlorination of tetrachloroethene (PCE) to trichloroethene (TCE) and of trichloroethene to cis-1,2-dichloroethene (DCE). This Desulfitobacterium hafniense (Desulfitobacterium frappieri) protein is Tetrachloroethene reductive dehalogenase.